A 165-amino-acid chain; its full sequence is Neuritin-like protein (165 aa).

The signal sequence occupies residues 1-35 (MMRCCRRRCCCRQPPHALRPLLLLPLVLLPPLAAA). A lipid anchor (GPI-anchor amidated alanine) is attached at Ala139. Residues 140–165 (PALPMAPAPPLLAAALALAYLLRPLA) constitute a propeptide, removed in mature form.

Belongs to the neuritin family.

It localises to the cell membrane. This Homo sapiens (Human) protein is Neuritin-like protein (NRN1L).